Here is a 465-residue protein sequence, read N- to C-terminus: UDP-N-acetylmuramoylalanine--D-glutamate ligase (465 aa).

ATP is bound at residue 115–121 (GTDGKTT).

The protein belongs to the MurCDEF family.

The protein localises to the cytoplasm. The enzyme catalyses UDP-N-acetyl-alpha-D-muramoyl-L-alanine + D-glutamate + ATP = UDP-N-acetyl-alpha-D-muramoyl-L-alanyl-D-glutamate + ADP + phosphate + H(+). It functions in the pathway cell wall biogenesis; peptidoglycan biosynthesis. Its function is as follows. Cell wall formation. Catalyzes the addition of glutamate to the nucleotide precursor UDP-N-acetylmuramoyl-L-alanine (UMA). This Chlorobaculum tepidum (strain ATCC 49652 / DSM 12025 / NBRC 103806 / TLS) (Chlorobium tepidum) protein is UDP-N-acetylmuramoylalanine--D-glutamate ligase.